The sequence spans 919 residues: MTDFLRDDIRFLGRILGEVIAEQEGQEVYELVEQARLTSFDIAKGNAEMDSLVQVFDGITPAKATPIARAFSHFALLANLAEDLHDEELREQALDAGDTPPDSTLDATWLKLNEGNVGAEAVADVLRNAEVAPVLTAHPTETRRRTVFDAQKWITTHMRERHALQSAEPTARTQSKLDEIEKNIRRRITILWQTALIRVARPRIEDEIEVGLRYYKLSLLEEIPRINRDVAVELRERFGEDVPLKPVVKPGSWIGGDHDGNPYVTAGTVEYSTRRAAETVLKYYARQLHSLEHELSLSDRMNEVTPQLLELADAGHNDVPSRVDEPYRRAVHGVRGRILATTAELIGEDAVEGVWFKVFTPYASPEEFLNDALTIDHSLRESNDVLIADDRLSVLISAIESFGFNLYSLDLRQNSESYEDVLTELFERAQVTANYRELSEEEKLEVLLKELRSPRPLIPHGSDEYSEVTDRELGIFRTASEAVKKFGPRMVPHCIISMASSVTDVLEPMVLLKEFGLIAANGDNPRGTVDVIPLFETIEDLRAGAGILGELWKIDLYRNYLLQRDNVQEVMLGYSDSNKDGGYFSANWALYDAELQLVELCRSAGVKLRLFHGRGGTVGRGGGPSYDAILAQPKGAVQGSVRITEQGEIISAKYGNPETARRNLEALVSATLEASLLDVSELTDHQRAYDIMSEISELSLKKYTSLVHEDQGFIDYFTQSTPLQEIGSLNIGSRPSSRKQTSSVEDLRAIPWVLSWSQSRVMLPGWFGVGTALEQWIGEGEQATQRIAELQTLNESWPFFTSVLDNMAQVMSKAELRLAKLYADLIPDREVAERVYSVIHEEYFLTKKMFCVITGSDDLLDDNPLLARSVQRRYPYLLPLNVIQVEMMRRYRKGDQSEQVSRNIQLTMNGLSTALRNSG.

Active-site residues include H138 and K579.

It belongs to the PEPCase type 1 family. Mg(2+) is required as a cofactor.

It carries out the reaction oxaloacetate + phosphate = phosphoenolpyruvate + hydrogencarbonate. Forms oxaloacetate, a four-carbon dicarboxylic acid source for the tricarboxylic acid cycle. The chain is Phosphoenolpyruvate carboxylase from Corynebacterium glutamicum (Brevibacterium saccharolyticum).